The sequence spans 538 residues: MGTRVTQFSYLHAPSSHMAEQLLNQFISAVISKSRHLNHLKQVQSFMIVSGLSHSHFLCFKLLRFCTLRLCNLSYARFIFDRFSFPNTHLYAAVLTAYSSSLPLHASSAFSFFRLMVNRSVPRPNHFIYPLVLKSTPYLSSAFSTPLVHTHLFKSGFHLYVVVQTALLHSYASSVSHITLARQLFDEMSERNVVSWTAMLSGYARSGDISNAVALFEDMPERDVPSWNAILAACTQNGLFLEAVSLFRRMINEPSIRPNEVTVVCVLSACAQTGTLQLAKGIHAFAYRRDLSSDVFVSNSLVDLYGKCGNLEEASSVFKMASKKSLTAWNSMINCFALHGRSEEAIAVFEEMMKLNINDIKPDHITFIGLLNACTHGGLVSKGRGYFDLMTNRFGIEPRIEHYGCLIDLLGRAGRFDEALEVMSTMKMKADEAIWGSLLNACKIHGHLDLAEVAVKNLVALNPNNGGYVAMMANLYGEMGNWEEARRARKMIKHQNAYKPPGWSRIEIDNEVHQFYSLDKSHPETEEIYMILDSLISF.

10 PPR repeats span residues 87-123 (NTHL…SVPR), 125-159 (NHFI…GFHL), 160-191 (YVVV…MSER), 192-226 (NVVS…DVPS), 227-253 (WNAI…MINE), 259-293 (NEVT…DLSS), 294-324 (DVFV…ASKK), 325-359 (SLTA…NIND), 363-398 (DHIT…GIEP), and 399-433 (RIEH…ADEA). Residues 434–509 (IWGSLLNACK…PPGWSRIEID (76 aa)) form a type E motif region.

It belongs to the PPR family. PCMP-E subfamily.

The polypeptide is Pentatricopeptide repeat-containing protein At1g33350 (PCMP-E57) (Arabidopsis thaliana (Mouse-ear cress)).